Consider the following 343-residue polypeptide: Ferrochelatase (343 aa).

The Fe cation site is built by His211 and Glu292.

It belongs to the ferrochelatase family.

Its subcellular location is the cytoplasm. It catalyses the reaction heme b + 2 H(+) = protoporphyrin IX + Fe(2+). The protein operates within porphyrin-containing compound metabolism; protoheme biosynthesis; protoheme from protoporphyrin-IX: step 1/1. In terms of biological role, catalyzes the ferrous insertion into protoporphyrin IX. This is Ferrochelatase from Gluconobacter oxydans (strain 621H) (Gluconobacter suboxydans).